Consider the following 166-residue polypeptide: Large ribosomal subunit protein uL10 (166 aa).

The protein belongs to the universal ribosomal protein uL10 family. Part of the ribosomal stalk of the 50S ribosomal subunit. The N-terminus interacts with L11 and the large rRNA to form the base of the stalk. The C-terminus forms an elongated spine to which L12 dimers bind in a sequential fashion forming a multimeric L10(L12)X complex.

Forms part of the ribosomal stalk, playing a central role in the interaction of the ribosome with GTP-bound translation factors. The polypeptide is Large ribosomal subunit protein uL10 (Aromatoleum aromaticum (strain DSM 19018 / LMG 30748 / EbN1) (Azoarcus sp. (strain EbN1))).